The following is a 180-amino-acid chain: Nucleoid-associated protein At4g30620, chloroplastic (180 aa).

The transit peptide at 1-48 (MASTATNTDFFKTLLSPFSNGNAAQRSSRQNIVWLNRKQSGNNNRSLR) directs the protein to the chloroplast. The disordered stretch occupies residues 45–65 (RSLRVNGLFGGGKKDNKEDGQ). Over residues 56–65 (GKKDNKEDGQ) the composition is skewed to basic and acidic residues.

Belongs to the YbaB/EbfC family. As to quaternary structure, homodimer. Binds to the translation initiation factors TIF3E1.

Its subcellular location is the plastid. It localises to the chloroplast. Functionally, binds to DNA and alters its conformation. May be involved in regulation of gene expression, nucleoid organization and DNA protection. This is Nucleoid-associated protein At4g30620, chloroplastic from Arabidopsis thaliana (Mouse-ear cress).